Here is a 305-residue protein sequence, read N- to C-terminus: Probable lipid kinase YegS-like (305 aa).

In terms of domain architecture, DAGKc spans 1-129 (MTQRRAMLIL…VDLGEVGGKL (129 aa)). Residues Thr-39, 65–71 (GDGTLRD), and Thr-92 each bind ATP. The Mg(2+) site is built by Leu-210, Asp-213, and Leu-215. The Proton acceptor role is filled by Glu-268.

The protein belongs to the diacylglycerol/lipid kinase family. YegS lipid kinase subfamily. Mg(2+) serves as cofactor. Ca(2+) is required as a cofactor.

The protein localises to the cytoplasm. Its function is as follows. Probably phosphorylates lipids; the in vivo substrate is unknown. The chain is Probable lipid kinase YegS-like from Pseudomonas savastanoi pv. phaseolicola (strain 1448A / Race 6) (Pseudomonas syringae pv. phaseolicola (strain 1448A / Race 6)).